The following is a 105-amino-acid chain: Large ribosomal subunit protein uL24 (105 aa).

This sequence belongs to the universal ribosomal protein uL24 family. Part of the 50S ribosomal subunit.

Its function is as follows. One of two assembly initiator proteins, it binds directly to the 5'-end of the 23S rRNA, where it nucleates assembly of the 50S subunit. One of the proteins that surrounds the polypeptide exit tunnel on the outside of the subunit. In Francisella tularensis subsp. novicida (strain U112), this protein is Large ribosomal subunit protein uL24.